Reading from the N-terminus, the 411-residue chain is Multidrug resistance protein MdtG (411 aa).

Helical transmembrane passes span 17-37 (LFVAWCGCFLTGIAFSLVMPF), 59-79 (LVFSITFLFSAIASPFWGGLA), 92-112 (ALGMSVVMVLMGLATSIWQFL), 116-136 (AVLGLLGGFVPNANALIATQV), 147-167 (WLSTGAVSGALIGPLIGGLLA), 174-194 (PVFFITASVLFVCFIMTLFAV), 222-242 (VLTLFVTTMIIQVATGSIAPI), 257-277 (LAFVSGLIASVPGVAALISAP), 291-311 (ILVAMLLVSVLLLIPMSMVQN), 320-340 (FLLGAADGALLPAVQTLLIYN), and 379-399 (AVFVVTACVVLFNAIYSWITL).

The protein belongs to the major facilitator superfamily. DHA1 family. MdtG (TC 2.A.1.2.20) subfamily.

Its subcellular location is the cell inner membrane. In Erwinia billingiae (strain Eb661), this protein is Multidrug resistance protein MdtG.